A 150-amino-acid chain; its full sequence is Ubiquitin-conjugating enzyme E2 3 (150 aa).

A UBC core domain is found at 4–150; that stretch reads PAKKRLMWDF…VIEIVEQSYV (147 aa). Cys-88 acts as the Glycyl thioester intermediate in catalysis.

This sequence belongs to the ubiquitin-conjugating enzyme family. In terms of tissue distribution, expressed in all tissues examined. Lower levels found in leaves.

It carries out the reaction S-ubiquitinyl-[E1 ubiquitin-activating enzyme]-L-cysteine + [E2 ubiquitin-conjugating enzyme]-L-cysteine = [E1 ubiquitin-activating enzyme]-L-cysteine + S-ubiquitinyl-[E2 ubiquitin-conjugating enzyme]-L-cysteine.. It functions in the pathway protein modification; protein ubiquitination. Its function is as follows. Accepts the ubiquitin from the E1 complex and catalyzes its covalent attachment to other proteins. In Arabidopsis thaliana (Mouse-ear cress), this protein is Ubiquitin-conjugating enzyme E2 3 (UBC3).